Here is a 1482-residue protein sequence, read N- to C-terminus: Chromosome partition protein MukB (1482 aa).

34–41 lines the ATP pocket; it reads GGNGAGKS. 5 coiled-coil regions span residues 326–472, 507–602, 780–805, 832–1110, and 1209–1265; these read LEAD…QTAH, NQRH…RRAP, RAAR…ATLS, DDPE…REQV, and VEAI…LQSV. The segment at 666–783 is flexible hinge; the sequence is PGGSEDPRLN…SLPLFGRAAR (118 aa).

Belongs to the SMC family. MukB subfamily. In terms of assembly, homodimerization via its hinge domain. Binds to DNA via its C-terminal region. Interacts, and probably forms a ternary complex, with MukE and MukF via its C-terminal region. The complex formation is stimulated by calcium or magnesium. Interacts with tubulin-related protein FtsZ.

The protein resides in the cytoplasm. Its subcellular location is the nucleoid. In terms of biological role, plays a central role in chromosome condensation, segregation and cell cycle progression. Functions as a homodimer, which is essential for chromosome partition. Involved in negative DNA supercoiling in vivo, and by this means organize and compact chromosomes. May achieve or facilitate chromosome segregation by condensation DNA from both sides of a centrally located replisome during cell division. The polypeptide is Chromosome partition protein MukB (Klebsiella pneumoniae subsp. pneumoniae (strain ATCC 700721 / MGH 78578)).